Here is an 822-residue protein sequence, read N- to C-terminus: IQ and AAA domain-containing protein 1-like (822 aa).

The region spanning 206-235 is the IQ domain; sequence QDQGAIVIQKVWKGYLQRKRIEQDRRMEME. Residues 338–363 show a composition bias toward basic and acidic residues; the sequence is RQELEAQAQENKKKEQEKNKDKVKEK. 2 disordered regions span residues 338–378 and 457–484; these read RQEL…KAKK and REETRPLKSPKKKGGKKSGKKKKEKDLT. Residues 464–479 show a composition bias toward basic residues; it reads KSPKKKGGKKSGKKKK. 569–576 contacts ATP; it reads GPSGMGKK.

This sequence belongs to the AAA ATPase family.

In Rattus norvegicus (Rat), this protein is IQ and AAA domain-containing protein 1-like (Iqca1l).